Reading from the N-terminus, the 240-residue chain is Glutathione S-transferase theta-1 (240 aa).

The region spanning glycine 2 to aspartate 82 is the GST N-terminal domain. Glutathione-binding positions include histidine 40, lysine 53–valine 54, and glutamate 66–serine 67. The region spanning aspartate 88–phenylalanine 220 is the GST C-terminal domain.

Belongs to the GST superfamily. Theta family. Homodimer. Found in erythrocyte. Expressed at low levels in liver. In lung, expressed at low levels in club cells and ciliated cells at the alveolar/bronchiolar junction. Absent from epithelial cells of larger bronchioles.

Its subcellular location is the cytoplasm. The catalysed reaction is RX + glutathione = an S-substituted glutathione + a halide anion + H(+). Its function is as follows. Conjugation of reduced glutathione to a wide number of exogenous and endogenous hydrophobic electrophiles. Acts on 1,2-epoxy-3-(4-nitrophenoxy)propane, phenethylisothiocyanate 4-nitrobenzyl chloride and 4-nitrophenethyl bromide. Displays glutathione peroxidase activity with cumene hydroperoxide. The polypeptide is Glutathione S-transferase theta-1 (GSTT1) (Homo sapiens (Human)).